Here is a 386-residue protein sequence, read N- to C-terminus: Sulfate adenylyltransferase (386 aa).

It belongs to the sulfate adenylyltransferase family.

It carries out the reaction sulfate + ATP + H(+) = adenosine 5'-phosphosulfate + diphosphate. It functions in the pathway sulfur metabolism; hydrogen sulfide biosynthesis; sulfite from sulfate: step 1/3. This is Sulfate adenylyltransferase from Persephonella marina (strain DSM 14350 / EX-H1).